A 238-amino-acid polypeptide reads, in one-letter code: Probable transcriptional regulatory protein SAK_1658 (238 aa).

It belongs to the TACO1 family. YeeN subfamily.

It localises to the cytoplasm. The sequence is that of Probable transcriptional regulatory protein SAK_1658 from Streptococcus agalactiae serotype Ia (strain ATCC 27591 / A909 / CDC SS700).